The sequence spans 681 residues: Glycogen-binding subunit 76A (681 aa).

Disordered regions lie at residues 1–20, 53–94, 232–251, 285–391, and 405–435; these read MNDP…SRPP, LGSQ…DLQP, SLTE…NGHL, FADR…ASNL, and QDAT…CRPQ. Residues 59–69 are compositionally biased toward acidic residues; that stretch reads EEGEGNAEDEP. Residues 72 to 91 are compositionally biased toward polar residues; the sequence is NGTSTNTWVNSHDSEQTVTD. 3 stretches are compositionally biased toward basic and acidic residues: residues 237–251, 297–308, and 321–336; these read EQTK…NGHL, RVQKESSQERVP, and PSDR…RVQE. Residues 353–364 show a composition bias toward polar residues; the sequence is TESISTEVTTLE. A compositionally biased stretch (basic and acidic residues) spans 365–374; the sequence is RSPEESRNDE. The 108-residue stretch at 525 to 632 folds into the CBM21 domain; that stretch reads AVREKQVSLE…NNYGANYCFQ (108 aa). Residue Thr-545 is modified to Phosphothreonine. Phosphoserine occurs at positions 547 and 549.

The protein is Glycogen-binding subunit 76A (Gbs-76A) of Drosophila melanogaster (Fruit fly).